We begin with the raw amino-acid sequence, 94 residues long: Transcription factor CPC (94 aa).

The interval methionine 1–methionine 10 is S1, required for cell-to-cell movements. Over residues methionine 1–aspartate 11 the composition is skewed to basic and acidic residues. The interval methionine 1–serine 25 is disordered. Positions serine 30–histidine 80 constitute a Myb-like domain. Residues tryptophan 76 to lysine 79 form an S2, required for cell-to-cell movements and nuclear localization region.

Interacts with GL3 and BHLH2. Interacts with SIEL. As to expression, expressed in trichomes and in young developing leaves, as well as in root hair and stele cells (pericycle and vascular tissues). Expressed in epidermal root hairless cells (atrichoblasts) and moves to root hair cells (trichoblasts) by a cell-to-cell movement through plasmodesmata (at protein level).

Its subcellular location is the nucleus. Transcription factor. Determines the fate of epidermal cell differentiation. Represses trichome development by lateral inhibition. Together with GL3 or BHLH2, promotes the formation of hair developing cells (H position) in root epidermis, probably by inhibiting non-hair cell formation. Represses the expression of GL2 and WER in H cells. Positively regulates stomatal formation in the hypocotyl. This is Transcription factor CPC (CPC) from Arabidopsis thaliana (Mouse-ear cress).